The sequence spans 653 residues: Choline transporter-like protein 1 (653 aa).

G2 is lipidated: N-myristoyl glycine. The Cytoplasmic portion of the chain corresponds to 2-29 (GCCSSASAAQSSKREWKPLEDRSCTDIP). A helical membrane pass occupies residues 30–50 (WLLLFVLFCIGMGFICGFSVA). The Mitochondrial intermembrane portion of the chain corresponds to 51-211 (TGAAARLVSG…RLISGVMTSK (161 aa)). Residues 212–232 (EIILGLCLLSLVLSMILMVII) form a helical membrane-spanning segment. The Cytoplasmic segment spans residues 233–237 (RYISR). A helical transmembrane segment spans residues 238-258 (VLVWILTVLVILGSLGGTGVL). Over 259-287 (WWLYAKQRRSPKEAVIPEQLQIAEDNLRA) the chain is Mitochondrial intermembrane. The chain crosses the membrane as a helical span at residues 288-308 (LLIYAISATVFTVILFLIMLV). The Cytoplasmic segment spans residues 309-314 (MRKRVA). Residues 315–335 (LTIALFHVAGKVFIHLPLLVF) form a helical membrane-spanning segment. Residues 336–337 (QP) are Mitochondrial intermembrane-facing. A helical transmembrane segment spans residues 338-358 (FWTFFALVLFWAYWIMTLLFL). Topologically, residues 359 to 379 (GTTGSAVQNEQGFVEYKISGP) are cytoplasmic. Residues 380-400 (LQYMWWYHVVGLIWISEFILA) form a helical membrane-spanning segment. Topologically, residues 401–536 (CQQMTVAGAV…RVAAINTVGD (136 aa)) are mitochondrial intermembrane. Residues 537–557 (FMLFLGKVLIVCSTGLAGIML) form a helical membrane-spanning segment. Residues 558–565 (LNYQQDYT) lie on the Cytoplasmic side of the membrane. Residues 566 to 586 (VWVLPLIIVCLFAFLVAHCFL) traverse the membrane as a helical segment. The Mitochondrial intermembrane segment spans residues 587-653 (SIYEMVVDVL…RELKPMLRKR (67 aa)).

The protein belongs to the CTL (choline transporter-like) family. In terms of tissue distribution, specifically abundant in skeletal muscle (at protein level).

The protein localises to the cell membrane. It localises to the mitochondrion outer membrane. The catalysed reaction is choline(out) + n H(+)(in) = choline(in) + n H(+)(out). The enzyme catalyses ethanolamine(out) + n H(+)(in) = ethanolamine(in) + n H(+)(out). In terms of biological role, choline/H+ antiporter. Also acts as a high-affinity ethanolamine/H+ antiporter, regulating the supply of extracellular ethanolamine (Etn) for the CDP-Etn pathway, redistribute intracellular Etn and balance the CDP-Cho and CDP-Etn arms of the Kennedy pathway. Involved in membrane synthesis and myelin production. This is Choline transporter-like protein 1 (Slc44a1) from Mus musculus (Mouse).